Consider the following 223-residue polypeptide: Putative archaetidylserine decarboxylase proenzyme (223 aa).

The active-site Schiff-base intermediate with substrate; via pyruvic acid is Ser183. Ser183 bears the Pyruvic acid (Ser); by autocatalysis mark.

It belongs to the phosphatidylserine decarboxylase family. PSD-A subfamily. Heterodimer of a large membrane-associated beta subunit and a small pyruvoyl-containing alpha subunit. Requires pyruvate as cofactor. Is synthesized initially as an inactive proenzyme. Formation of the active enzyme involves a self-maturation process in which the active site pyruvoyl group is generated from an internal serine residue via an autocatalytic post-translational modification. Two non-identical subunits are generated from the proenzyme in this reaction, and the pyruvate is formed at the N-terminus of the alpha chain, which is derived from the carboxyl end of the proenzyme. The post-translation cleavage follows an unusual pathway, termed non-hydrolytic serinolysis, in which the side chain hydroxyl group of the serine supplies its oxygen atom to form the C-terminus of the beta chain, while the remainder of the serine residue undergoes an oxidative deamination to produce ammonia and the pyruvoyl prosthetic group on the alpha chain.

The protein localises to the cell membrane. It catalyses the reaction archaetidylserine + H(+) = archaetidylethanolamine + CO2. Catalyzes the formation of archaetidylethanolamine (PtdEtn) from archaetidylserine (PtdSer). In Methanothermobacter thermautotrophicus (strain ATCC 29096 / DSM 1053 / JCM 10044 / NBRC 100330 / Delta H) (Methanobacterium thermoautotrophicum), this protein is Putative archaetidylserine decarboxylase proenzyme.